Here is a 406-residue protein sequence, read N- to C-terminus: GTPase Obg (406 aa).

Residues 1-159 form the Obg domain; the sequence is MKFVDEVSIH…RDLKLELKVL (159 aa). Positions 127–148 are disordered; sequence NTRFKSSTNRAPRQTTPGKPGE. Residues 129-143 show a composition bias toward polar residues; that stretch reads RFKSSTNRAPRQTTP. In terms of domain architecture, OBG-type G spans 160–334; sequence ADVGLLGLPN…LSQDIMRYLD (175 aa). Residues 166–173, 191–195, 213–216, 283–286, and 315–317 contribute to the GTP site; these read GLPNAGKS, FTTLV, DIPG, NKMD, and SAL. Ser173 and Thr193 together coordinate Mg(2+). The disordered stretch occupies residues 382–406; sequence AGAVDDDDFDDEEDDGDGPEIFYVP. The segment covering 385–399 has biased composition (acidic residues); the sequence is VDDDDFDDEEDDGDG.

The protein belongs to the TRAFAC class OBG-HflX-like GTPase superfamily. OBG GTPase family. As to quaternary structure, monomer. It depends on Mg(2+) as a cofactor.

It localises to the cytoplasm. In terms of biological role, an essential GTPase which binds GTP, GDP and possibly (p)ppGpp with moderate affinity, with high nucleotide exchange rates and a fairly low GTP hydrolysis rate. Plays a role in control of the cell cycle, stress response, ribosome biogenesis and in those bacteria that undergo differentiation, in morphogenesis control. This chain is GTPase Obg, found in Pseudomonas aeruginosa (strain LESB58).